An 80-amino-acid chain; its full sequence is Exodeoxyribonuclease 7 small subunit (80 aa).

Belongs to the XseB family. As to quaternary structure, heterooligomer composed of large and small subunits.

It is found in the cytoplasm. The catalysed reaction is Exonucleolytic cleavage in either 5'- to 3'- or 3'- to 5'-direction to yield nucleoside 5'-phosphates.. Bidirectionally degrades single-stranded DNA into large acid-insoluble oligonucleotides, which are then degraded further into small acid-soluble oligonucleotides. The sequence is that of Exodeoxyribonuclease 7 small subunit from Rickettsia africae (strain ESF-5).